We begin with the raw amino-acid sequence, 702 residues long: MSSDIIMAGLGRPFTLGFLYDARREKLIPGFSLFGDETLQKYATSTPQHSSDFQIVASDSVESKSNVMDIEASLGVSFLGGLVEVGGSAKYLNNTKKYQNQSRVTLQYKVTTTFKQFKAPPGKVNVQQTAISDKNVATHVVTAILFGANAFFVFDSDKVEDSNLQDIQGKMEAVIKKIPSVSIEGSGSVQLTDEEKSLASNLSCKFHGDFLLESLPTTFEEAVMTYQKLPELVGEEASDGVPMKVWLVPLTRFYSKADLLVRDISQGLVRKVHSILEDLHKLKRRANDSLEDDTVKLFPLLEKKLKNFQKNYSDYMTTFRRTISQKLQSIRKGDEDETAMLQLFEDRLRSPFNIDSLNMWMEITEREINVLRSCIDIIEETKHKAVLSQSQMVKDLLDSEVMHAVCYVFTYVTDKDHYLDALRDYLKSPNSRPARVRPVVTWVASNTVLETMREKAHLFRSLAKDMENRCVHFLVASIVNLKVEGAAIHYYRESVLIEPNFKHPIISAVEKIVDRRDLLWYDCELTLDPNTSHPSLYLSEGNKKAVTGTLRAFDNNPERFGLWQQVLCNKGLSRRHYWEVEWNGYVIVGVTYSSIGRKNIDIQSFIGFSETSWTLMFIPKNGVAVKGARRSVSYYFISDLAFPPLGLYHDCHASTLSFYKVSDNVLNHFHTIEIKPKLSEPVYAIIRIGDEDRPYHGTVRLL.

The interval Ser-2–Ser-265 is structural MACPF/CDC pore-forming domain. N-linked (GlcNAc...) asparagine glycosylation is found at Asn-93, Asn-100, Asn-201, Asn-287, and Asn-311. Residues Gln-266–Ala-385 form a structural FAT domain region. The interval Val-386–Val-513 is thioredoxin (THX) domain. The 198-residue stretch at Ile-505–Leu-702 folds into the B30.2/SPRY domain. Residue Asn-530 is glycosylated (N-linked (GlcNAc...) asparagine).

The protein belongs to the SNTX/VTX toxin family. In terms of assembly, heterodimer of alpha and beta subunits; non-covalently linked. Also associates into tetramers or even higher aggregates. Intrachain disulfide bonds may be present in the heterodimer. In terms of tissue distribution, expressed by the venom gland.

It is found in the secreted. Functionally, this heterodimer induces potent hemolytic activities (when tested on rabbit erythrocytes, EC(50)=25-56 ng/mL) due to its ability to form pores in the cell membrane. The pore may be composed of 10 alpha/beta heterodimers. The toxin shows cardiovascular effects that include a vasorelaxant action that may involve the L-arginine-nitric oxid synthase pathway. In addition, it displays edema-inducing activities, increases vascular permeability. It also shows myotoxic activities and interferes irreversibly with neuromuscular function. It also induces irreversible platelet aggregation in rabbit or rat (but not in human or mouse) whole blood. In addition, it has been observed to increase spontaneous quantal acetylcholine release from isolated frog cutaneous pectoris motor endings. The polypeptide is Cytolytic toxin-alpha (Scorpaena plumieri (Spotted scorpionfish)).